The following is a 179-amino-acid chain: ATP synthase subunit delta (179 aa).

This sequence belongs to the ATPase delta chain family. In terms of assembly, F-type ATPases have 2 components, F(1) - the catalytic core - and F(0) - the membrane proton channel. F(1) has five subunits: alpha(3), beta(3), gamma(1), delta(1), epsilon(1). F(0) has three main subunits: a(1), b(2) and c(10-14). The alpha and beta chains form an alternating ring which encloses part of the gamma chain. F(1) is attached to F(0) by a central stalk formed by the gamma and epsilon chains, while a peripheral stalk is formed by the delta and b chains.

Its subcellular location is the cell membrane. Functionally, f(1)F(0) ATP synthase produces ATP from ADP in the presence of a proton or sodium gradient. F-type ATPases consist of two structural domains, F(1) containing the extramembraneous catalytic core and F(0) containing the membrane proton channel, linked together by a central stalk and a peripheral stalk. During catalysis, ATP synthesis in the catalytic domain of F(1) is coupled via a rotary mechanism of the central stalk subunits to proton translocation. This protein is part of the stalk that links CF(0) to CF(1). It either transmits conformational changes from CF(0) to CF(1) or is implicated in proton conduction. In Staphylococcus saprophyticus subsp. saprophyticus (strain ATCC 15305 / DSM 20229 / NCIMB 8711 / NCTC 7292 / S-41), this protein is ATP synthase subunit delta.